Reading from the N-terminus, the 92-residue chain is Small ribosomal subunit protein uS19c (92 aa).

Belongs to the universal ribosomal protein uS19 family.

It localises to the plastid. It is found in the chloroplast. Functionally, protein S19 forms a complex with S13 that binds strongly to the 16S ribosomal RNA. The chain is Small ribosomal subunit protein uS19c from Nasturtium officinale (Watercress).